The chain runs to 430 residues: Glutamine synthetase, chloroplastic/mitochondrial (430 aa).

A chloroplast and mitochondrion-targeting transit peptide spans 1–45 (MAQILAASPTCQMRVPKHSSVIASSSKLWSSVVLKQKKQSNNKVR). In terms of domain architecture, GS beta-grasp spans 77–157 (IIAEYIWIGG…VICDTWTPAG (81 aa)). Positions 97-122 (TIEKPVEDPSELPKWNYDGSSTGQAP) are disordered. S106 is subject to Phosphoserine. One can recognise a GS catalytic domain in the interval 161–430 (PTNKRAKAAE…LAAQKLSLNV (270 aa)).

The protein belongs to the glutamine synthetase family. Homooctamer. In terms of tissue distribution, expressed in mesophyll and epidermal cells of leaves.

It is found in the plastid. It localises to the chloroplast. The protein resides in the mitochondrion. The catalysed reaction is L-glutamate + NH4(+) + ATP = L-glutamine + ADP + phosphate + H(+). Functionally, the light-modulated chloroplast/mitochondrial enzyme, encoded by a nuclear gene and expressed primarily in leaves, is responsible for the reassimilation of the ammonia generated by photorespiration. The polypeptide is Glutamine synthetase, chloroplastic/mitochondrial (GLN2) (Arabidopsis thaliana (Mouse-ear cress)).